We begin with the raw amino-acid sequence, 95 residues long: Costars family protein At4g33640 (95 aa).

Methionine 1 carries the N-acetylmethionine modification.

It belongs to the costars family.

The polypeptide is Costars family protein At4g33640 (Arabidopsis thaliana (Mouse-ear cress)).